The chain runs to 212 residues: Ras-related protein Rab-15 (212 aa).

S17, G18, V19, G20, K21, T22, C23, S35, S39, and T40 together coordinate GTP. T22 is a binding site for Mg(2+). 2 short sequence motifs (switch) span residues 31–45 (NEFH…GVDF) and 63–80 (DTAG…YYRR). Mg(2+)-binding residues include T40 and D63. 6 residues coordinate GTP: G66, N121, K122, D124, S151, and A152. The interval 192 to 212 (ELEEDEGKPEGPANSSKTCWC) is disordered. Residues C210 and C212 are each lipidated (S-geranylgeranyl cysteine). C212 is subject to Cysteine methyl ester.

The protein belongs to the small GTPase superfamily. Rab family. As to quaternary structure, the GTP bound form of RAB15 interacts with REP15. Interacts (GTP-bound form) with MICAL1, MICAL3, MICALCL, EHBP1 and EHBP1L1. The cofactor is Mg(2+).

It is found in the cell membrane. The enzyme catalyses GTP + H2O = GDP + phosphate + H(+). With respect to regulation, regulated by guanine nucleotide exchange factors (GEFs) which promote the exchange of bound GDP for free GTP. Regulated by GTPase activating proteins (GAPs) which increase the GTP hydrolysis activity. Inhibited by GDP dissociation inhibitors (GDIs). In terms of biological role, the small GTPases Rab are key regulators of intracellular membrane trafficking, from the formation of transport vesicles to their fusion with membranes. Rabs cycle between an inactive GDP-bound form and an active GTP-bound form that is able to recruit to membranes different sets of downstream effectors directly responsible for vesicle formation, movement, tethering and fusion. RAB15 may act in concert with RAB3A in regulating aspects of synaptic vesicle membrane flow within the nerve terminal. This chain is Ras-related protein Rab-15, found in Mus musculus (Mouse).